The sequence spans 512 residues: Acid-sensing ion channel 2 (512 aa).

The Cytoplasmic segment spans residues 1–37 (MDLKESPSEGSLQPSSIQIFANTSTLHGIRHIFVYGP). Phosphoserine is present on residues serine 8 and serine 11. The helical transmembrane segment at 38–58 (LTIRRVLWAVAFVGSLGLLLV) threads the bilayer. Topologically, residues 59 to 427 (ESSERVSYYF…EQKKAYEVAA (369 aa)) are extracellular. 6 disulfide bridges follow: cysteine 92-cysteine 193, cysteine 289-cysteine 364, cysteine 307-cysteine 360, cysteine 311-cysteine 358, cysteine 320-cysteine 342, and cysteine 322-cysteine 334. N-linked (GlcNAc...) asparagine glycosylation is found at asparagine 365 and asparagine 392. The helical transmembrane segment at 428–448 (LLGDIGGQMGLFIGASILTIL) threads the bilayer. The GAS motif; ion selectivity filter motif lies at 441–443 (GAS). The Cytoplasmic portion of the chain corresponds to 449–512 (ELFDYIYELI…ALGTLEEIAC (64 aa)).

This sequence belongs to the amiloride-sensitive sodium channel (TC 1.A.6) family. ASIC2 subfamily. As to quaternary structure, can form homotrimers. Heterotrimer; forms functional heterotrimers producing channel with different properties. Forms heterotrimers with ASIC1; while ASIC1 determines current amplitude, ASIC2 influences the properties of the current. Forms heterotrimers with ASIC3; resulting in channels with distinct properties. Interacts with STOM; STOM regulates the gating of ASIC2-containing channels. Interacts with PICK1; promotes ASIC3 phosphorylation by PKC and activation of ASIC2/ASIC3 heterotrimers. As to expression, expressed by sensory neurons. Expressed by nociceptive sensory neurons, spiral ganglion (SG) neurons and the retina (at protein level). Expressed in outer nuclear layer of retina (photoreceptors) and to a lower extent in distal and proximal inner nuclear layer.

It localises to the cell membrane. It carries out the reaction Na(+)(in) = Na(+)(out). The enzyme catalyses K(+)(in) = K(+)(out). The catalysed reaction is Li(+)(in) = Li(+)(out). Inhibited by the diuretic drug amiloride. Forms pH-gated trimeric sodium channels that act as postsynaptic excitatory sensors in the nervous system. Upon extracellular acidification, these channels generate rapid, transient inward currents that fully desensitize. Highly selective for sodium, they are permeable to other cations. By forming heterotrimeric channels with ASIC1, could contribute to synaptic plasticity, learning, and memory. Additionally, as acid sensors at nerve terminals, plays a role in mechanosensation and phototransduction. Its function is as follows. Has no pH-gated sodium channel activity per se but can associate with other ASICs to produce functional channels with specific properties. This chain is Acid-sensing ion channel 2, found in Mus musculus (Mouse).